The primary structure comprises 465 residues: A-type ATP synthase subunit B (465 aa).

The protein belongs to the ATPase alpha/beta chains family. In terms of assembly, has multiple subunits with at least A(3), B(3), C, D, E, F, H, I and proteolipid K(x).

The protein localises to the cell membrane. In terms of biological role, component of the A-type ATP synthase that produces ATP from ADP in the presence of a proton gradient across the membrane. The B chain is a regulatory subunit. This chain is A-type ATP synthase subunit B, found in Thermococcus kodakarensis (strain ATCC BAA-918 / JCM 12380 / KOD1) (Pyrococcus kodakaraensis (strain KOD1)).